The chain runs to 207 residues: Glycerol-3-phosphate acyltransferase (207 aa).

6 helical membrane-spanning segments follow: residues 1-21 (MIIIAYLLGSIQTGLWIGKYF), 42-62 (ILGVKAGIVTLTIDILKGTLA), 65-85 (IPIILGITTISPFFIGFFAII), 105-125 (AGVLLGFAPSFFLYLLVIFLL), 138-158 (ITVAVVGILSVLIFPLVGFIL), and 159-179 (TDYDWIFTTVVILMALTIIIR).

The protein belongs to the PlsY family. Probably interacts with PlsX.

It is found in the cell membrane. It carries out the reaction an acyl phosphate + sn-glycerol 3-phosphate = a 1-acyl-sn-glycero-3-phosphate + phosphate. Its pathway is lipid metabolism; phospholipid metabolism. Catalyzes the transfer of an acyl group from acyl-phosphate (acyl-PO(4)) to glycerol-3-phosphate (G3P) to form lysophosphatidic acid (LPA). This enzyme utilizes acyl-phosphate as fatty acyl donor, but not acyl-CoA or acyl-ACP. The sequence is that of Glycerol-3-phosphate acyltransferase from Streptococcus agalactiae serotype Ia (strain ATCC 27591 / A909 / CDC SS700).